A 254-amino-acid polypeptide reads, in one-letter code: Alcohol dehydrogenase (254 aa).

Residue 10–33 coordinates NAD(+); the sequence is FVAGLGGIGLDTSRELVKRDLKNL. Position 138 (serine 138) interacts with substrate. Tyrosine 151 (proton acceptor) is an active-site residue.

The protein belongs to the short-chain dehydrogenases/reductases (SDR) family. As to quaternary structure, homodimer.

The catalysed reaction is a primary alcohol + NAD(+) = an aldehyde + NADH + H(+). It carries out the reaction a secondary alcohol + NAD(+) = a ketone + NADH + H(+). This is Alcohol dehydrogenase (Adh) from Drosophila madeirensis (Fruit fly).